A 376-amino-acid chain; its full sequence is Erythronate-4-phosphate dehydrogenase (376 aa).

The substrate site is built by serine 45 and threonine 67. Residue aspartate 147 participates in NAD(+) binding. Residue arginine 209 is part of the active site. Position 233 (aspartate 233) interacts with NAD(+). The active site involves glutamate 238. Histidine 255 functions as the Proton donor in the catalytic mechanism. Glycine 258 provides a ligand contact to NAD(+). Residue tyrosine 259 coordinates substrate.

Belongs to the D-isomer specific 2-hydroxyacid dehydrogenase family. PdxB subfamily. In terms of assembly, homodimer.

Its subcellular location is the cytoplasm. It carries out the reaction 4-phospho-D-erythronate + NAD(+) = (R)-3-hydroxy-2-oxo-4-phosphooxybutanoate + NADH + H(+). The protein operates within cofactor biosynthesis; pyridoxine 5'-phosphate biosynthesis; pyridoxine 5'-phosphate from D-erythrose 4-phosphate: step 2/5. In terms of biological role, catalyzes the oxidation of erythronate-4-phosphate to 3-hydroxy-2-oxo-4-phosphonooxybutanoate. This Shewanella sp. (strain MR-7) protein is Erythronate-4-phosphate dehydrogenase.